The primary structure comprises 876 residues: Phosphoenolpyruvate carboxylase (876 aa).

Residues H138 and K543 contribute to the active site.

Belongs to the PEPCase type 1 family. It depends on Mg(2+) as a cofactor.

The catalysed reaction is oxaloacetate + phosphate = phosphoenolpyruvate + hydrogencarbonate. Functionally, forms oxaloacetate, a four-carbon dicarboxylic acid source for the tricarboxylic acid cycle. The polypeptide is Phosphoenolpyruvate carboxylase (Vibrio atlanticus (strain LGP32) (Vibrio splendidus (strain Mel32))).